A 65-amino-acid chain; its full sequence is uncharacterized protein (65 aa).

The next 2 helical transmembrane spans lie at 4–24 and 39–59; these read AWLF…DKVL and LPIP…FIVF.

It is found in the membrane. This is an uncharacterized protein from Streptococcus pneumoniae serotype 2 (strain D39 / NCTC 7466).